Reading from the N-terminus, the 128-residue chain is Small ribosomal subunit protein uS11 (128 aa).

It belongs to the universal ribosomal protein uS11 family. As to quaternary structure, part of the 30S ribosomal subunit. Interacts with proteins S7 and S18. Binds to IF-3.

In terms of biological role, located on the platform of the 30S subunit, it bridges several disparate RNA helices of the 16S rRNA. Forms part of the Shine-Dalgarno cleft in the 70S ribosome. The polypeptide is Small ribosomal subunit protein uS11 (Leuconostoc mesenteroides subsp. mesenteroides (strain ATCC 8293 / DSM 20343 / BCRC 11652 / CCM 1803 / JCM 6124 / NCDO 523 / NBRC 100496 / NCIMB 8023 / NCTC 12954 / NRRL B-1118 / 37Y)).